The sequence spans 198 residues: Peptidyl-tRNA hydrolase (198 aa).

Y15 serves as a coordination point for tRNA. H20 (proton acceptor) is an active-site residue. Residues F66, N68, and N114 each contribute to the tRNA site.

The protein belongs to the PTH family. In terms of assembly, monomer.

The protein localises to the cytoplasm. The catalysed reaction is an N-acyl-L-alpha-aminoacyl-tRNA + H2O = an N-acyl-L-amino acid + a tRNA + H(+). Hydrolyzes ribosome-free peptidyl-tRNAs (with 1 or more amino acids incorporated), which drop off the ribosome during protein synthesis, or as a result of ribosome stalling. Functionally, catalyzes the release of premature peptidyl moieties from peptidyl-tRNA molecules trapped in stalled 50S ribosomal subunits, and thus maintains levels of free tRNAs and 50S ribosomes. This is Peptidyl-tRNA hydrolase from Cupriavidus metallidurans (strain ATCC 43123 / DSM 2839 / NBRC 102507 / CH34) (Ralstonia metallidurans).